A 194-amino-acid chain; its full sequence is Threonylcarbamoyl-AMP synthase (194 aa).

The YrdC-like domain maps to 11-194 (FRNLMKIINA…GINYKIIRKG (184 aa)).

The protein belongs to the SUA5 family. TsaC subfamily.

The protein localises to the cytoplasm. The enzyme catalyses L-threonine + hydrogencarbonate + ATP = L-threonylcarbamoyladenylate + diphosphate + H2O. Functionally, required for the formation of a threonylcarbamoyl group on adenosine at position 37 (t(6)A37) in tRNAs that read codons beginning with adenine. Catalyzes the conversion of L-threonine, HCO(3)(-)/CO(2) and ATP to give threonylcarbamoyl-AMP (TC-AMP) as the acyladenylate intermediate, with the release of diphosphate. This chain is Threonylcarbamoyl-AMP synthase, found in Wigglesworthia glossinidia brevipalpis.